Consider the following 183-residue polypeptide: Bifunctional protein PyrR (183 aa).

Residues valine 102 to threonine 114 carry the PRPP-binding motif.

This sequence belongs to the purine/pyrimidine phosphoribosyltransferase family. PyrR subfamily. As to quaternary structure, homodimer and homohexamer; in equilibrium.

The catalysed reaction is UMP + diphosphate = 5-phospho-alpha-D-ribose 1-diphosphate + uracil. In terms of biological role, regulates transcriptional attenuation of the pyrimidine nucleotide (pyr) operon by binding in a uridine-dependent manner to specific sites on pyr mRNA. This disrupts an antiterminator hairpin in the RNA and favors formation of a downstream transcription terminator, leading to a reduced expression of downstream genes. Functionally, also displays a weak uracil phosphoribosyltransferase activity which is not physiologically significant. This is Bifunctional protein PyrR from Listeria monocytogenes serotype 4b (strain CLIP80459).